The primary structure comprises 59 residues: UPF0391 membrane protein AZC_4184 (59 aa).

The next 2 helical transmembrane spans lie at W4–A24 and I30–F50.

It belongs to the UPF0391 family.

It is found in the cell membrane. This chain is UPF0391 membrane protein AZC_4184, found in Azorhizobium caulinodans (strain ATCC 43989 / DSM 5975 / JCM 20966 / LMG 6465 / NBRC 14845 / NCIMB 13405 / ORS 571).